Here is a 291-residue protein sequence, read N- to C-terminus: Porphobilinogen deaminase (291 aa).

Cysteine 237 carries the S-(dipyrrolylmethanemethyl)cysteine modification.

Belongs to the HMBS family. In terms of assembly, monomer. Dipyrromethane is required as a cofactor.

It carries out the reaction 4 porphobilinogen + H2O = hydroxymethylbilane + 4 NH4(+). Its pathway is porphyrin-containing compound metabolism; protoporphyrin-IX biosynthesis; coproporphyrinogen-III from 5-aminolevulinate: step 2/4. Its function is as follows. Tetrapolymerization of the monopyrrole PBG into the hydroxymethylbilane pre-uroporphyrinogen in several discrete steps. The protein is Porphobilinogen deaminase of Clostridium acetobutylicum (strain ATCC 824 / DSM 792 / JCM 1419 / IAM 19013 / LMG 5710 / NBRC 13948 / NRRL B-527 / VKM B-1787 / 2291 / W).